Consider the following 2430-residue polypeptide: Transcription factor HIVEP2 (2430 aa).

The interval 1-127 (MDTGDTALGQ…SLEGPPWLFP (127 aa)) is disordered. 2 stretches are compositionally biased toward polar residues: residues 11 to 22 (KATSRSGETDSV) and 96 to 110 (HSLSFPQHSLSQGMT). 2 consecutive C2H2-type zinc fingers follow at residues 189 to 211 (YICPYCSRACAKPSVLKKHIRSH) and 217 to 239 (YPCIPCGFSFKTKSNLYKHRKSH). Disordered regions lie at residues 271–302 (IHSDGEQSTDTDEESSLFAEASDKVSPGPPVP), 374–418 (SEKK…NTNA), and 744–995 (AHGH…SGKH). A compositionally biased stretch (polar residues) spans 381–418 (SEPSLNLLSPHSKGSTDSGYFSRSESAEQQISPPNTNA). Composition is skewed to basic and acidic residues over residues 744–753 (AHGHSDRLDP) and 775–784 (DPDKMTDLGK). Positions 792–804 (SVIQHTNSLSRPN) are enriched in polar residues. Ser811 carries the post-translational modification Phosphoserine. The segment covering 853 to 863 (SKPTPSQQVPQ) has biased composition (polar residues). The span at 884–908 (RVTEEPDKPEKEKEAPTKEPEKPVE) shows a compositional bias: basic and acidic residues. The short motif at 929–935 (PKKKRLR) is the Nuclear localization signal element. Phosphoserine occurs at positions 942, 947, 1040, 1431, and 1435. Residues 944-974 (GESSFESTGTGLSRSPSQESNLSHSSSFSMS) show a composition bias toward low complexity. Positions 1472–1584 (KKGLSRPQKP…GGQQEEEGKA (113 aa)) are disordered. Composition is skewed to low complexity over residues 1499–1520 (SRSSSFSSLSPSSSQDHPSASG) and 1560–1569 (SDMSMSPQSS). 2 consecutive C2H2-type zinc fingers follow at residues 1783-1805 (YICEECGIRCKKPSMLKKHIRTH) and 1811-1835 (YVCKLCNFAFKTKGNLTKHMKSKAH). Disordered regions lie at residues 1848–1931 (SVDD…SSLP) and 1986–2117 (FQSK…SPRR). Over residues 1850 to 1860 (DDTETEEAENM) the composition is skewed to acidic residues. The segment covering 1861-1871 (EELHKTSEKHS) has biased composition (basic and acidic residues). Acidic residues predominate over residues 1883 to 1909 (DAEESDGEDGDDNDDDDEDDDDFDDQG). A compositionally biased stretch (basic and acidic residues) spans 1991–2001 (TDSEPDKDRLD). A compositionally biased stretch (low complexity) spans 2013 to 2037 (SSEPSSSPRDFSPSSYRSSPGYDSS). 10 tandem repeats follow at residues 2037-2040 (SPCR), 2043-2046 (SPKR), 2055-2058 (SPRR), 2067-2070 (SPMR), 2073-2076 (SPRK), 2090-2093 (SPRR), 2096-2099 (SPRR), 2102-2105 (SPGK), 2114-2117 (SPRR), and 2129-2132 (SPRR). A 10 X 4 AA tandem repeats of S-P-[RGMKC]-[RK] region spans residues 2037 to 2132 (SPCRDNSPKR…TTIRAPSPRR (96 aa)). Positions 2062–2085 (PRRDLSPMRHLSPRKEAALRREMS) are enriched in basic and acidic residues. Phosphoserine is present on Ser2102. Positions 2107 to 2116 (ITARRDLSPR) are enriched in basic and acidic residues. Disordered stretches follow at residues 2226-2252 (PALSGLHPPPTLPLPTEGSEEKKGAPG), 2268-2309 (KQAP…QEEN), and 2352-2430 (SIRH…NQLH). A compositionally biased stretch (low complexity) spans 2271 to 2289 (PQVLQSSGLPSSPSSPRLL). Phosphoserine is present on residues Ser2281 and Ser2285. The span at 2291 to 2301 (KQSTSEDSLNS) shows a compositional bias: polar residues. Positions 2371–2380 (PDLHDGEKDT) are enriched in basic and acidic residues. Positions 2406–2417 (FQSSKELSLSTE) are enriched in polar residues. Residues Ser2413 and Ser2415 each carry the phosphoserine modification.

In terms of assembly, interacts with TCF4. In terms of tissue distribution, expressed in heart, lung, skeletal muscle and liver. In the brain expressed in cerebral cortex, hippocampus, corpora amygdala and cerebellar cortex.

The protein resides in the nucleus. Its function is as follows. Specifically binds to the DNA sequence 5'-GGGACTTTCC-3' which is found in the enhancer elements of numerous viral promoters such as those of SV40, CMV, or HIV1. In addition, related sequences are found in the enhancer elements of a number of cellular promoters, including those of the class I MHC, interleukin-2 receptor, somatostatin receptor II, and interferon-beta genes. It may act in T-cell activation. The sequence is that of Transcription factor HIVEP2 (Hivep2) from Mus musculus (Mouse).